The chain runs to 134 residues: Small ribosomal subunit protein bS16 (134 aa).

The segment at 105–134 (QNERREKRLAIKTRRRQAKKAAEAEGQESA) is disordered. Positions 114–123 (AIKTRRRQAK) are enriched in basic residues.

This sequence belongs to the bacterial ribosomal protein bS16 family.

The polypeptide is Small ribosomal subunit protein bS16 (Chlorobium phaeobacteroides (strain BS1)).